The chain runs to 854 residues: Aryl hydrocarbon receptor (854 aa).

Positions 1 to 9 (MSSGANITY) are excised as a propeptide. Residues 1 to 38 (MSSGANITYASRKRRKPVQKTVKPIPAEGIKSNPSKRH) form a disordered region. 2 short sequence motifs (nuclear localization signal) span residues 12 to 15 (RKRR) and 36 to 41 (KRHRDR). Residues 26–79 (PAEGIKSNPSKRHRDRLNTELDRLASLLPFPQDVINKLDKLSVLRLSVSYLRAK) enclose the bHLH domain. Residues 37 to 65 (RHRDRLNTELDRLASLLPFPQDVINKLDK) are DNA-binding. Required for maintaining the overall integrity of the AHR:ARNT heterodimer and its transcriptional activity regions lie at residues 49–81 (LASL…AKSF), 116–124 (LLQALNGFV), and 264–266 (FAI). Residues 63 to 71 (LDKLSVLRL) carry the Nuclear export signal motif. Residues 111-175 (QEGEFLLQAL…AEFQRQLHWA (65 aa)) form the PAS 1 domain. The PAS 2 domain occupies 270 to 340 (LQPPSILEIR…CAESHIRMIK (71 aa)). One can recognise a PAC domain in the interval 346–387 (MTVFRLLAKHSRWRWVQSNARLIYRNGRPDYIIATQRPLTDE). Residues 425–452 (LPIRTKSNTSRKDWAPQSTPSKDSFHPS) form a disordered region. Residues 440–452 (PQSTPSKDSFHPS) show a composition bias toward polar residues.

In terms of assembly, homodimer. Heterodimer; efficient DNA binding requires dimerization with another bHLH protein. Interacts with ARNT; the heterodimer ARNT:AHR binds to core DNA sequence 5'-TGCGTG-3' within the dioxin response element (DRE) of target gene promoters and activates their transcription. Binds MYBBP1A. Interacts with coactivators including SRC-1, RIP140 and NOCA7, and with the corepressor SMRT. Interacts with NEDD8 and IVNS1ABP. Interacts with BMAL1. Interacts with HSP90AB1. Interacts with TIPARP; leading to mono-ADP-ribosylation of AHR and subsequent inhibition of AHR. Post-translationally, mono-ADP-ribosylated, leading to inhibit transcription activator activity of AHR.

Its subcellular location is the cytoplasm. It localises to the nucleus. Functionally, ligand-activated transcription factor that enables cells to adapt to changing conditions by sensing compounds from the environment, diet, microbiome and cellular metabolism, and which plays important roles in development, immunity and cancer. Upon ligand binding, translocates into the nucleus, where it heterodimerizes with ARNT and induces transcription by binding to xenobiotic response elements (XRE). Regulates a variety of biological processes, including angiogenesis, hematopoiesis, drug and lipid metabolism, cell motility and immune modulation. Xenobiotics can act as ligands: upon xenobiotic-binding, activates the expression of multiple phase I and II xenobiotic chemical metabolizing enzyme genes (such as the CYP1A1 gene). Mediates biochemical and toxic effects of halogenated aromatic hydrocarbons. Next to xenobiotics, natural ligands derived from plants, microbiota, and endogenous metabolism are potent AHR agonists. Tryptophan (Trp) derivatives constitute an important class of endogenous AHR ligands. Acts as a negative regulator of anti-tumor immunity: indoles and kynurenic acid generated by Trp catabolism act as ligand and activate AHR, thereby promoting AHR-driven cancer cell motility and suppressing adaptive immunity. Regulates the circadian clock by inhibiting the basal and circadian expression of the core circadian component PER1. Inhibits PER1 by repressing the CLOCK-BMAL1 heterodimer mediated transcriptional activation of PER1. The heterodimer ARNT:AHR binds to core DNA sequence 5'-TGCGTG-3' within the dioxin response element (DRE) of target gene promoters and activates their transcription. This chain is Aryl hydrocarbon receptor (Ahr), found in Mus spretus (Western Mediterranean mouse).